The sequence spans 256 residues: Small ribosomal subunit protein uS3 (256 aa).

A KH type-2 domain is found at 39 to 111 (IREFLNENFS…EVILNIIEVR (73 aa)). Residues 219-256 (DTRKPFEAGNQKRGQKRRPRNDQPGQRPQQRNRNSKED) form a disordered region. Residues 240-250 (DQPGQRPQQRN) are compositionally biased toward low complexity.

It belongs to the universal ribosomal protein uS3 family. As to quaternary structure, part of the 30S ribosomal subunit. Forms a tight complex with proteins S10 and S14.

Its function is as follows. Binds the lower part of the 30S subunit head. Binds mRNA in the 70S ribosome, positioning it for translation. The protein is Small ribosomal subunit protein uS3 of Acholeplasma laidlawii (strain PG-8A).